The primary structure comprises 485 residues: Protein nucleotidyltransferase YdiU (485 aa).

ATP contacts are provided by glycine 85, glycine 87, arginine 88, lysine 108, aspartate 120, glycine 121, arginine 171, and arginine 178. Aspartate 249 functions as the Proton acceptor in the catalytic mechanism. Asparagine 250 and aspartate 259 together coordinate Mg(2+). Residue aspartate 259 coordinates ATP. The segment at 462–485 is disordered; that stretch reads LPTTPNYQDPPADGDRSYQTFCGT.

Belongs to the SELO family. Mg(2+) serves as cofactor. Mn(2+) is required as a cofactor.

It catalyses the reaction L-seryl-[protein] + ATP = 3-O-(5'-adenylyl)-L-seryl-[protein] + diphosphate. The catalysed reaction is L-threonyl-[protein] + ATP = 3-O-(5'-adenylyl)-L-threonyl-[protein] + diphosphate. It carries out the reaction L-tyrosyl-[protein] + ATP = O-(5'-adenylyl)-L-tyrosyl-[protein] + diphosphate. The enzyme catalyses L-histidyl-[protein] + UTP = N(tele)-(5'-uridylyl)-L-histidyl-[protein] + diphosphate. It catalyses the reaction L-seryl-[protein] + UTP = O-(5'-uridylyl)-L-seryl-[protein] + diphosphate. The catalysed reaction is L-tyrosyl-[protein] + UTP = O-(5'-uridylyl)-L-tyrosyl-[protein] + diphosphate. Its function is as follows. Nucleotidyltransferase involved in the post-translational modification of proteins. It can catalyze the addition of adenosine monophosphate (AMP) or uridine monophosphate (UMP) to a protein, resulting in modifications known as AMPylation and UMPylation. This is Protein nucleotidyltransferase YdiU from Teredinibacter turnerae (strain ATCC 39867 / T7901).